The primary structure comprises 264 residues: Ribosome-recycling factor, mitochondrial (264 aa).

Belongs to the RRF family.

It is found in the mitochondrion. Its function is as follows. Necessary for protein synthesis in mitochondria. Functions as a ribosome recycling factor in mitochondria. The sequence is that of Ribosome-recycling factor, mitochondrial (RRF1) from Yarrowia lipolytica (strain CLIB 122 / E 150) (Yeast).